The primary structure comprises 548 residues: Chaperonin GroEL (548 aa).

Residues 30-33 (TLGP), lysine 51, 87-91 (DGTTT), glycine 415, 479-481 (NAA), and aspartate 495 contribute to the ATP site.

This sequence belongs to the chaperonin (HSP60) family. As to quaternary structure, forms a cylinder of 14 subunits composed of two heptameric rings stacked back-to-back. Interacts with the co-chaperonin GroES.

It is found in the cytoplasm. The enzyme catalyses ATP + H2O + a folded polypeptide = ADP + phosphate + an unfolded polypeptide.. Together with its co-chaperonin GroES, plays an essential role in assisting protein folding. The GroEL-GroES system forms a nano-cage that allows encapsulation of the non-native substrate proteins and provides a physical environment optimized to promote and accelerate protein folding. This Salmonella gallinarum (strain 287/91 / NCTC 13346) protein is Chaperonin GroEL.